We begin with the raw amino-acid sequence, 406 residues long: 4-hydroxy-3-methylbut-2-en-1-yl diphosphate synthase (ferredoxin) (406 aa).

[4Fe-4S] cluster contacts are provided by Cys-315, Cys-318, Cys-349, and Glu-356.

Belongs to the IspG family. Requires [4Fe-4S] cluster as cofactor.

The enzyme catalyses (2E)-4-hydroxy-3-methylbut-2-enyl diphosphate + 2 oxidized [2Fe-2S]-[ferredoxin] + H2O = 2-C-methyl-D-erythritol 2,4-cyclic diphosphate + 2 reduced [2Fe-2S]-[ferredoxin] + H(+). Its pathway is isoprenoid biosynthesis; isopentenyl diphosphate biosynthesis via DXP pathway; isopentenyl diphosphate from 1-deoxy-D-xylulose 5-phosphate: step 5/6. Converts 2C-methyl-D-erythritol 2,4-cyclodiphosphate (ME-2,4cPP) into 1-hydroxy-2-methyl-2-(E)-butenyl 4-diphosphate. This Trichodesmium erythraeum (strain IMS101) protein is 4-hydroxy-3-methylbut-2-en-1-yl diphosphate synthase (ferredoxin).